A 418-amino-acid chain; its full sequence is Sialidase-3 (418 aa).

Positions 24-27 (YRIP) match the FRIP motif motif. The substrate site is built by R25 and R45. Catalysis depends on D50, which acts as the Proton acceptor. One copy of the BNR 1 repeat lies at 129–140 (LCSEDAGCSWGE). Substrate-binding residues include Y179 and Y181. Residues 203-214 (SDDFGVTWHHGK) form a BNR 2 repeat. Residues E223 and R243 each coordinate substrate. A BNR 3 repeat occupies 254-265 (STDSGGCFQKPT). S312 is modified (phosphoserine). Position 339 (R339) interacts with substrate. Y369 acts as the Nucleophile in catalysis. E386 is an active-site residue.

The protein belongs to the glycosyl hydrolase 33 family. As to quaternary structure, interacts with CAV1; this interaction enhances NEU3 sialidase activity within caveola. Interacts with EGFR; this interaction mediates desialylation of EGFR and enhances downstream signaling. Palmitoylated; may regulate intracellular trafficking and anchorage to plasma membrane and endomembranes. In terms of tissue distribution, expressed in heart, brain and cerebral cortex.

It localises to the cell membrane. Its subcellular location is the membrane. The protein resides in the caveola. The protein localises to the early endosome membrane. It is found in the recycling endosome membrane. It localises to the lysosome membrane. It carries out the reaction Hydrolysis of alpha-(2-&gt;3)-, alpha-(2-&gt;6)-, alpha-(2-&gt;8)- glycosidic linkages of terminal sialic acid residues in oligosaccharides, glycoproteins, glycolipids, colominic acid and synthetic substrates.. The catalysed reaction is a ganglioside GD1a + H2O = a ganglioside GM1 + N-acetylneuraminate. The enzyme catalyses a ganglioside GD1a (d18:1(4E)) + H2O = a ganglioside GM1 (d18:1(4E)) + N-acetylneuraminate. It catalyses the reaction a ganglioside GD1b + H2O = a ganglioside GM1 + N-acetylneuraminate. It carries out the reaction a ganglioside GD1b (d18:1(4E)) + H2O = a ganglioside GM1 (d18:1(4E)) + N-acetylneuraminate. The catalysed reaction is a ganglioside GD3 + H2O = a ganglioside GM3 + N-acetylneuraminate. The enzyme catalyses a ganglioside GD3 (d18:1(4E)) + H2O = a ganglioside GM3 (d18:1(4E)) + N-acetylneuraminate. It catalyses the reaction a ganglioside GM3 + H2O = a beta-D-galactosyl-(1-&gt;4)-beta-D-glucosyl-(1&lt;-&gt;1)-ceramide + N-acetylneuraminate. It carries out the reaction a ganglioside GM1 + H2O = a ganglioside GA1 + N-acetylneuraminate. The catalysed reaction is a ganglioside GM1 (d18:1(4E)) + H2O = a ganglioside GA1 (d18:1(4E)) + N-acetylneuraminate. The enzyme catalyses a ganglioside GM2 (d18:1(4E)) + H2O = a ganglioside GA2 (d18:1(4E)) + N-acetylneuraminate. It catalyses the reaction a ganglioside GM3 (d18:1(4E)) + H2O = a beta-D-Gal-(1-&gt;4)-beta-D-Glc-(1&lt;-&gt;1)-Cer(d18:1(4E)) + N-acetylneuraminate. It carries out the reaction a ganglioside GT1b + H2O = a ganglioside GD1b + N-acetylneuraminate. Functionally, exo-alpha-sialidase that catalyzes the hydrolytic cleavage of the terminal sialic acid (N-acetylneuraminic acid, Neu5Ac) of a glycan moiety in the catabolism of glycolipids, glycoproteins and oligosacharides. Displays high catalytic efficiency for gangliosides including alpha-(2-&gt;3)-sialylated GD1a and GM3 and alpha-(2-&gt;8)-sialylated GD3. Plays a role in the regulation of transmembrane signaling through the modulation of ganglioside content of the lipid bilayer and by direct interaction with signaling receptors, such as EGFR. Desialylates EGFR and activates downstream signaling in proliferating cells. Contributes to clathrin-mediated endocytosis by regulating sorting of endocytosed receptors to early and recycling endosomes. The sequence is that of Sialidase-3 (Neu3) from Mus musculus (Mouse).